A 466-amino-acid chain; its full sequence is Asparagine--tRNA ligase (466 aa).

Belongs to the class-II aminoacyl-tRNA synthetase family. Homodimer.

Its subcellular location is the cytoplasm. The catalysed reaction is tRNA(Asn) + L-asparagine + ATP = L-asparaginyl-tRNA(Asn) + AMP + diphosphate + H(+). This Escherichia coli O157:H7 protein is Asparagine--tRNA ligase.